The sequence spans 76 residues: Protein OPG128 (76 aa).

A disulfide bond links Cys-17 and Cys-21.

This sequence belongs to the orthopoxvirus OPG128 family. Interacts with sulfhydryl oxidase OPG072; this interaction involves formation of a transient disulfide-bonded intermediate, allowing disulfide bond transfer. Interacts with OPG088; this interaction involves formation of a transient disulfide-bonded intermediate, allowing disulfide bond transfer.

In terms of biological role, late protein which probably participates in disulfide bond formation by functioning as a thiol-disulfide transfer protein between membrane-associated OPG072 and OPG08. The complete pathway for formation of disulfide bonds in intracellular virion membrane proteins sequentially involves oxidation of OPG072, OPG128 and OPG08. The sequence is that of Protein OPG128 (OPG128) from Variola virus (isolate Human/India/Ind3/1967) (VARV).